Here is a 182-residue protein sequence, read N- to C-terminus: Probable tail terminator protein (182 aa).

Its subcellular location is the virion. It is found in the host cytoplasm. Functionally, may stop tail tube polymerization by capping the rapidly polymerizing tail tube once it has reached its requisite length and prevent its depolymerization. In Enterobacteriaceae (Bacteriophage Mu), this protein is Probable tail terminator protein.